A 211-amino-acid chain; its full sequence is MTVLLFGFEPFLEYKENPSQLIVEALNRSTILKEEVKGVILPVEYKKIEDVIVTKIRETKPILTLGIGLAPGRAKITPEKIAINYRYSREGDNAGKKYRGEKIDPLGQDGIFTNIPVEDLVDLLNENGIPAELSLSAGSYLCNNAMYIIIREARKYNSLGGFIHVPLHESYAARIQRSIPSMSLDTMIRGIKLSIEFILTNKNKKENLTLS.

Residues E79, C142, and H164 contribute to the active site.

It belongs to the peptidase C15 family. In terms of assembly, homotetramer.

It is found in the cytoplasm. It carries out the reaction Release of an N-terminal pyroglutamyl group from a polypeptide, the second amino acid generally not being Pro.. Functionally, removes 5-oxoproline from various penultimate amino acid residues except L-proline. In Saccharolobus solfataricus (strain ATCC 35092 / DSM 1617 / JCM 11322 / P2) (Sulfolobus solfataricus), this protein is Pyrrolidone-carboxylate peptidase 1 (pcp1).